The following is a 291-amino-acid chain: MGDYLVKALGFEGKVRAYALKATEMVNEAVRRQDTWPTASAALGRTMMAGTMMAAMLKGDAKLTVKVEGDGPIGAIIVDSQANGQTRGYVKNPHVHFELNEHGKLDVARAVGTNGSLSVVKDIGLRDHFTGSVPLVSGELGEDFTYYFVSSEQTPSSVGVGVLVNPDNSVLAAGGFVLQLMPGADDAIISEIEKRLQTIPPISKLVEAGMPPEEILAALLGDDNVKILEKMPIEFACQCSKERIARAIISLGKDEIRAMIEEDGGAETTCHFCNEVYLFSKEELETLYEEA.

Intrachain disulfides connect Cys-237–Cys-239 and Cys-270–Cys-273.

This sequence belongs to the HSP33 family. In terms of processing, under oxidizing conditions two disulfide bonds are formed involving the reactive cysteines. Under reducing conditions zinc is bound to the reactive cysteines and the protein is inactive.

It is found in the cytoplasm. Its function is as follows. Redox regulated molecular chaperone. Protects both thermally unfolding and oxidatively damaged proteins from irreversible aggregation. Plays an important role in the bacterial defense system toward oxidative stress. The chain is 33 kDa chaperonin from Halalkalibacterium halodurans (strain ATCC BAA-125 / DSM 18197 / FERM 7344 / JCM 9153 / C-125) (Bacillus halodurans).